The following is a 367-amino-acid chain: Peptide chain release factor 2 (367 aa).

Q250 bears the N5-methylglutamine mark.

It belongs to the prokaryotic/mitochondrial release factor family. Methylated by PrmC. Methylation increases the termination efficiency of RF2.

It localises to the cytoplasm. Peptide chain release factor 2 directs the termination of translation in response to the peptide chain termination codons UGA and UAA. In Kineococcus radiotolerans (strain ATCC BAA-149 / DSM 14245 / SRS30216), this protein is Peptide chain release factor 2.